The following is a 527-amino-acid chain: Bifunctional methyltransferase (527 aa).

The interval 1-309 (MQYSIKQVLS…GHSRVILFSP (309 aa)) is hemK. Residues 1–311 (MQYSIKQVLS…SRVILFSPIN (311 aa)) are RF MTase. Residues 149 to 153 (GTGSG), D172, W201, N216, E356, E381, N408, and D430 each bind S-adenosyl-L-methionine. Residue 216–219 (NPPY) participates in substrate binding. The segment at 310 to 527 (INLNRSYARR…IILQHVSGDH (218 aa)) is tRNA (guanine-N(7)-)-methyltransferase. Positions 314-527 (RSYARRIGKS…IILQHVSGDH (214 aa)) are tRNA MTase. D430 is a catalytic residue. Substrate is bound by residues K434 and D466.

The protein in the C-terminal section; belongs to the class I-like SAM-binding methyltransferase superfamily. TrmB family. This sequence in the N-terminal section; belongs to the protein N5-glutamine methyltransferase family. PrmC subfamily.

The enzyme catalyses L-glutaminyl-[peptide chain release factor] + S-adenosyl-L-methionine = N(5)-methyl-L-glutaminyl-[peptide chain release factor] + S-adenosyl-L-homocysteine + H(+). It catalyses the reaction guanosine(46) in tRNA + S-adenosyl-L-methionine = N(7)-methylguanosine(46) in tRNA + S-adenosyl-L-homocysteine. Functionally, methylates the class 1 translation termination release factors RF1/PrfA and RF2/PrfB on the glutamine residue of the universally conserved GGQ motif. Its function is as follows. Catalyzes the formation of N(7)-methylguanine at position 46 (m7G46) in tRNA. The polypeptide is Bifunctional methyltransferase (prmC/trmB) (Rickettsia felis (strain ATCC VR-1525 / URRWXCal2) (Rickettsia azadi)).